Here is a 184-residue protein sequence, read N- to C-terminus: ATP synthase subunit b, chloroplastic (184 aa).

A helical membrane pass occupies residues Leu27–Leu49.

The protein belongs to the ATPase B chain family. As to quaternary structure, F-type ATPases have 2 components, F(1) - the catalytic core - and F(0) - the membrane proton channel. F(1) has five subunits: alpha(3), beta(3), gamma(1), delta(1), epsilon(1). F(0) has four main subunits: a(1), b(1), b'(1) and c(10-14). The alpha and beta chains form an alternating ring which encloses part of the gamma chain. F(1) is attached to F(0) by a central stalk formed by the gamma and epsilon chains, while a peripheral stalk is formed by the delta, b and b' chains.

The protein resides in the plastid. It localises to the chloroplast thylakoid membrane. In terms of biological role, f(1)F(0) ATP synthase produces ATP from ADP in the presence of a proton or sodium gradient. F-type ATPases consist of two structural domains, F(1) containing the extramembraneous catalytic core and F(0) containing the membrane proton channel, linked together by a central stalk and a peripheral stalk. During catalysis, ATP synthesis in the catalytic domain of F(1) is coupled via a rotary mechanism of the central stalk subunits to proton translocation. Component of the F(0) channel, it forms part of the peripheral stalk, linking F(1) to F(0). The chain is ATP synthase subunit b, chloroplastic from Guizotia abyssinica (Niger).